Consider the following 449-residue polypeptide: Protein CapK (449 aa).

The protein operates within capsule biogenesis; capsule polysaccharide biosynthesis. Its function is as follows. Required for the biosynthesis of type 1 capsular polysaccharide. The chain is Protein CapK (capK) from Staphylococcus aureus.